A 185-amino-acid chain; its full sequence is Hypoxanthine/guanine phosphoribosyltransferase (185 aa).

Belongs to the purine/pyrimidine phosphoribosyltransferase family. Archaeal HPRT subfamily. As to quaternary structure, homodimer.

It is found in the cytoplasm. The catalysed reaction is IMP + diphosphate = hypoxanthine + 5-phospho-alpha-D-ribose 1-diphosphate. The enzyme catalyses GMP + diphosphate = guanine + 5-phospho-alpha-D-ribose 1-diphosphate. It participates in purine metabolism; IMP biosynthesis via salvage pathway; IMP from hypoxanthine: step 1/1. Functionally, catalyzes a salvage reaction resulting in the formation of IMP that is energically less costly than de novo synthesis. This chain is Hypoxanthine/guanine phosphoribosyltransferase, found in Methanococcus vannielii (strain ATCC 35089 / DSM 1224 / JCM 13029 / OCM 148 / SB).